Consider the following 278-residue polypeptide: Dehydrogenase/reductase SDR family member 4 (278 aa).

36–60 (LVTASTDGIGFAIARRLAQDGAHVV) contacts NADP(+). Lys92 bears the N6-acetyllysine; alternate mark. Lys92 carries the post-translational modification N6-succinyllysine; alternate. Lys105 carries the post-translational modification N6-acetyllysine. Ser169 contacts substrate. The Proton acceptor role is filled by Tyr182. Lys186 is a binding site for NADP(+). The residue at position 216 (Lys216) is an N6-acetyllysine; alternate. Lys216 carries the N6-succinyllysine; alternate modification. Ser220 carries the post-translational modification Phosphoserine. An N6-succinyllysine mark is found at Lys227 and Lys234. The Peroxisomal targeting signal motif lies at 276–278 (SRL).

The protein belongs to the short-chain dehydrogenases/reductases (SDR) family. Homotetramer.

The protein localises to the peroxisome. It catalyses the reaction a secondary alcohol + NADP(+) = a ketone + NADPH + H(+). The enzyme catalyses 3beta-hydroxy-5beta-pregnane-20-one + NADP(+) = 5beta-pregnan-3,20-dione + NADPH + H(+). It carries out the reaction 5beta-dihydrotestosterone + NADPH + H(+) = 5beta-androstane-3beta,17beta-diol + NADP(+). The catalysed reaction is 5beta-androstane-3,17-dione + NADPH + H(+) = 3beta-hydroxy-5beta-androstane-17-one + NADP(+). It catalyses the reaction isatin + NADPH + H(+) = 3-hydroxyindolin-2-one + NADP(+). The enzyme catalyses lithocholate + NADP(+) = 3-oxo-5beta-cholan-24-oate + NADPH + H(+). It carries out the reaction 3-oxo-5beta-cholan-24-oate + NADPH + H(+) = isolithocholate + NADP(+). Its function is as follows. NADPH-dependent oxidoreductase which catalyzes the reduction of a variety of compounds bearing carbonyl groups including ketosteroids, alpha-dicarbonyl compounds, aldehydes, aromatic ketones and quinones. Reduces 3-ketosteroids and benzil into 3beta-hydroxysteroids and R-benzoin, respectively, in contrast to the stereoselectivity of non-primate DHRS4s which produce 3alpha-hydroxysteroids and S-benzoin. Diplays low activity toward all-trans-retinal and no activity toward 9-cis-retinal as compared to non-primate mammals. In the reverse reaction, catalyze the NAD-dependent oxidation of 3beta-hydroxysteroids and alcohol, but with much lower efficiency. Involved in the metabolism of 3beta-hydroxysteroids, isatin and xenobiotic carbonyl compounds. The polypeptide is Dehydrogenase/reductase SDR family member 4 (DHRS4) (Pongo abelii (Sumatran orangutan)).